A 487-amino-acid chain; its full sequence is Kynureninase 1 (487 aa).

Pyridoxal 5'-phosphate is bound by residues Leu-147, Thr-148, 175 to 178 (FPSD), Ser-232, Asp-261, His-264, and Tyr-286. An N6-(pyridoxal phosphate)lysine modification is found at Lys-287. Residues Trp-327 and Asn-355 each coordinate pyridoxal 5'-phosphate.

This sequence belongs to the kynureninase family. As to quaternary structure, homodimer. The cofactor is pyridoxal 5'-phosphate.

The protein resides in the cytoplasm. The enzyme catalyses L-kynurenine + H2O = anthranilate + L-alanine + H(+). It carries out the reaction 3-hydroxy-L-kynurenine + H2O = 3-hydroxyanthranilate + L-alanine + H(+). It participates in amino-acid degradation; L-kynurenine degradation; L-alanine and anthranilate from L-kynurenine: step 1/1. Its pathway is cofactor biosynthesis; NAD(+) biosynthesis; quinolinate from L-kynurenine: step 2/3. Its function is as follows. Catalyzes the cleavage of L-kynurenine (L-Kyn) and L-3-hydroxykynurenine (L-3OHKyn) into anthranilic acid (AA) and 3-hydroxyanthranilic acid (3-OHAA), respectively. This is Kynureninase 1 (bna5-1) from Aspergillus oryzae (strain ATCC 42149 / RIB 40) (Yellow koji mold).